Here is a 352-residue protein sequence, read N- to C-terminus: Adenosine deaminase (352 aa).

A2 is modified (N-acetylalanine). H15 and H17 together coordinate Zn(2+). Substrate is bound by residues H17 and D19. At K54 the chain carries N6-acetyllysine. Position 184 (G184) interacts with substrate. H214 is a Zn(2+) binding site. The Proton donor role is filled by E217. K232 bears the N6-acetyllysine mark. Residue D295 coordinates Zn(2+). D296 is a substrate binding site.

The protein belongs to the metallo-dependent hydrolases superfamily. Adenosine and AMP deaminases family. In terms of assembly, interacts with DPP4 (via extracellular domain). Interacts with PLG (via Kringle 4 domain); the interaction stimulates PLG activation when in complex with DPP4. It depends on Zn(2+) as a cofactor. In terms of tissue distribution, detected in brain and liver (at protein level).

The protein resides in the cell membrane. Its subcellular location is the cell junction. It is found in the cytoplasmic vesicle lumen. It localises to the cytoplasm. The protein localises to the lysosome. The enzyme catalyses adenosine + H2O + H(+) = inosine + NH4(+). It carries out the reaction 2'-deoxyadenosine + H2O + H(+) = 2'-deoxyinosine + NH4(+). It catalyses the reaction cordycepin + H2O + H(+) = 3'-deoxyinosine + NH4(+). Its function is as follows. Catalyzes the hydrolytic deamination of adenosine and 2-deoxyadenosine. Plays an important role in purine metabolism and in adenosine homeostasis. Modulates signaling by extracellular adenosine, and so contributes indirectly to cellular signaling events. Acts as a positive regulator of T-cell coactivation, by binding DPP4. Its interaction with DPP4 regulates lymphocyte-epithelial cell adhesion. Enhances dendritic cell immunogenicity by affecting dendritic cell costimulatory molecule expression and cytokines and chemokines secretion. Enhances CD4+ T-cell differentiation and proliferation. Acts as a positive modulator of adenosine receptors ADORA1 and ADORA2A, by enhancing their ligand affinity via conformational change. Stimulates plasminogen activation. Plays a role in male fertility. Plays a protective role in early postimplantation embryonic development. Also responsible for the deamination of cordycepin (3'-deoxyadenosine), a fungal natural product that shows antitumor, antibacterial, antifungal, antivirus, and immune regulation properties. This chain is Adenosine deaminase (Ada), found in Rattus norvegicus (Rat).